The primary structure comprises 261 residues: Enolase-phosphatase E1 (261 aa).

Positions 16 and 18 each coordinate Mg(2+). Substrate is bound by residues 153-154 and K187; that span reads SS. D212 lines the Mg(2+) pocket.

Belongs to the HAD-like hydrolase superfamily. MasA/MtnC family. Monomer. Mg(2+) is required as a cofactor.

The protein localises to the cytoplasm. It localises to the nucleus. The enzyme catalyses 5-methylsulfanyl-2,3-dioxopentyl phosphate + H2O = 1,2-dihydroxy-5-(methylsulfanyl)pent-1-en-3-one + phosphate. It participates in amino-acid biosynthesis; L-methionine biosynthesis via salvage pathway; L-methionine from S-methyl-5-thio-alpha-D-ribose 1-phosphate: step 3/6. The protein operates within amino-acid biosynthesis; L-methionine biosynthesis via salvage pathway; L-methionine from S-methyl-5-thio-alpha-D-ribose 1-phosphate: step 4/6. Its function is as follows. Bifunctional enzyme that catalyzes the enolization of 2,3-diketo-5-methylthiopentyl-1-phosphate (DK-MTP-1-P) into the intermediate 2-hydroxy-3-keto-5-methylthiopentenyl-1-phosphate (HK-MTPenyl-1-P), which is then dephosphorylated to form the acireductone 1,2-dihydroxy-3-keto-5-methylthiopentene (DHK-MTPene). The protein is Enolase-phosphatase E1 (enoph1) of Salmo salar (Atlantic salmon).